Consider the following 386-residue polypeptide: Ovalbumin (386 aa).

Glycine 2 carries the post-translational modification N-acetylglycine. Positions 22-48 (HHANENIFYSPFTIISALAMVYLGAKD) form a signal peptide, not cleaved. Phosphoserine is present on serine 69. Cysteine 74 and cysteine 121 are joined by a disulfide. Residues asparagine 293 and asparagine 312 are each glycosylated (N-linked (GlcNAc...) asparagine). Serine 345 is subject to Phosphoserine. Asparagine 372 carries N-linked (GlcNAc...) asparagine glycosylation.

It belongs to the serpin family. Ov-serpin subfamily. Post-translationally, the signal sequence is not cleaved. The functional signal for membrane translocation of ovalbumin becomes accessible when the nascent chain is 50 to 60 residues long. The hydrophobic sequence which lies between residues 27 and 43 folds back on the preceding residues to form an amphipathic hairpin structure which is the signal element recognized by the membrane. In terms of tissue distribution, major protein of egg white.

The protein resides in the secreted. In terms of biological role, storage protein of egg white. Lack protease inhibitory activity. This chain is Ovalbumin (SERPINB14), found in Meleagris gallopavo (Wild turkey).